A 142-amino-acid polypeptide reads, in one-letter code: Prefoldin subunit alpha (142 aa).

The protein belongs to the prefoldin subunit alpha family. Heterohexamer of two alpha and four beta subunits.

It is found in the cytoplasm. In terms of biological role, molecular chaperone capable of stabilizing a range of proteins. Seems to fulfill an ATP-independent, HSP70-like function in archaeal de novo protein folding. This chain is Prefoldin subunit alpha, found in Methanosarcina mazei (strain ATCC BAA-159 / DSM 3647 / Goe1 / Go1 / JCM 11833 / OCM 88) (Methanosarcina frisia).